The sequence spans 257 residues: Snake venom serine protease KN1 (257 aa).

Residues 1-18 form the signal peptide; sequence MVLIRVLANLLILQLSYA. Residues 19–24 constitute a propeptide that is removed on maturation; that stretch reads QKSSEL. In terms of domain architecture, Peptidase S1 spans 25 to 248; that stretch reads VVGGHPCNIN…HLDWIKSIIA (224 aa). 5 cysteine pairs are disulfide-bonded: Cys31/Cys162, Cys49/Cys65, Cys141/Cys209, Cys173/Cys188, and Cys199/Cys224. Catalysis depends on His64, which acts as the Charge relay system. Asn102 carries an N-linked (GlcNAc...) asparagine glycan. The Charge relay system role is filled by Asp109. 2 N-linked (GlcNAc...) asparagine glycosylation sites follow: Asn120 and Asn121. Ser203 functions as the Charge relay system in the catalytic mechanism.

It belongs to the peptidase S1 family. Snake venom subfamily. As to quaternary structure, monomer. In terms of tissue distribution, expressed by the venom gland.

The protein resides in the secreted. In terms of biological role, snake venom serine protease that may act in the hemostasis system of the prey. This Trimeresurus stejnegeri (Chinese green tree viper) protein is Snake venom serine protease KN1.